The following is a 369-amino-acid chain: UDP-N-acetylglucosamine--N-acetylmuramyl-(pentapeptide) pyrophosphoryl-undecaprenol N-acetylglucosamine transferase (369 aa).

UDP-N-acetyl-alpha-D-glucosamine-binding positions include 15-17, Asn-126, Arg-169, Ser-197, and Gln-299; that span reads TGG.

Belongs to the glycosyltransferase 28 family. MurG subfamily.

The protein resides in the cell inner membrane. It carries out the reaction di-trans,octa-cis-undecaprenyl diphospho-N-acetyl-alpha-D-muramoyl-L-alanyl-D-glutamyl-meso-2,6-diaminopimeloyl-D-alanyl-D-alanine + UDP-N-acetyl-alpha-D-glucosamine = di-trans,octa-cis-undecaprenyl diphospho-[N-acetyl-alpha-D-glucosaminyl-(1-&gt;4)]-N-acetyl-alpha-D-muramoyl-L-alanyl-D-glutamyl-meso-2,6-diaminopimeloyl-D-alanyl-D-alanine + UDP + H(+). It functions in the pathway cell wall biogenesis; peptidoglycan biosynthesis. Functionally, cell wall formation. Catalyzes the transfer of a GlcNAc subunit on undecaprenyl-pyrophosphoryl-MurNAc-pentapeptide (lipid intermediate I) to form undecaprenyl-pyrophosphoryl-MurNAc-(pentapeptide)GlcNAc (lipid intermediate II). The protein is UDP-N-acetylglucosamine--N-acetylmuramyl-(pentapeptide) pyrophosphoryl-undecaprenol N-acetylglucosamine transferase of Methylorubrum extorquens (strain CM4 / NCIMB 13688) (Methylobacterium extorquens).